Here is a 175-residue protein sequence, read N- to C-terminus: Shikimate kinase (175 aa).

Residue 16–21 (GAGKST) participates in ATP binding. Ser20 provides a ligand contact to Mg(2+). Substrate-binding residues include Asp38, Arg62, and Gly84. Arg122 is a binding site for ATP. Arg141 contacts substrate.

It belongs to the shikimate kinase family. In terms of assembly, monomer. Mg(2+) serves as cofactor.

It localises to the cytoplasm. The catalysed reaction is shikimate + ATP = 3-phosphoshikimate + ADP + H(+). The protein operates within metabolic intermediate biosynthesis; chorismate biosynthesis; chorismate from D-erythrose 4-phosphate and phosphoenolpyruvate: step 5/7. Functionally, catalyzes the specific phosphorylation of the 3-hydroxyl group of shikimic acid using ATP as a cosubstrate. In Legionella pneumophila (strain Paris), this protein is Shikimate kinase.